The chain runs to 68 residues: DNA-directed RNA polymerase subunit omega (68 aa).

This sequence belongs to the RNA polymerase subunit omega family. The RNAP catalytic core consists of 2 alpha, 1 beta, 1 beta' and 1 omega subunit. When a sigma factor is associated with the core the holoenzyme is formed, which can initiate transcription.

It carries out the reaction RNA(n) + a ribonucleoside 5'-triphosphate = RNA(n+1) + diphosphate. In terms of biological role, promotes RNA polymerase assembly. Latches the N- and C-terminal regions of the beta' subunit thereby facilitating its interaction with the beta and alpha subunits. The protein is DNA-directed RNA polymerase subunit omega of Dechloromonas aromatica (strain RCB).